Reading from the N-terminus, the 202-residue chain is Superoxide dismutase [Fe] (202 aa).

The Fe cation site is built by H27, H82, D164, and H168.

Belongs to the iron/manganese superoxide dismutase family. Homodimer. It depends on Fe cation as a cofactor.

The catalysed reaction is 2 superoxide + 2 H(+) = H2O2 + O2. Functionally, destroys superoxide anion radicals which are normally produced within the cells and which are toxic to biological systems. This Enterococcus faecalis (strain ATCC 700802 / V583) protein is Superoxide dismutase [Fe] (sodA).